Consider the following 283-residue polypeptide: Bifunctional protein FolD (283 aa).

NADP(+) is bound by residues 159-161, Ser184, and Ile225; that span reads GRS.

Belongs to the tetrahydrofolate dehydrogenase/cyclohydrolase family. As to quaternary structure, homodimer.

The catalysed reaction is (6R)-5,10-methylene-5,6,7,8-tetrahydrofolate + NADP(+) = (6R)-5,10-methenyltetrahydrofolate + NADPH. It catalyses the reaction (6R)-5,10-methenyltetrahydrofolate + H2O = (6R)-10-formyltetrahydrofolate + H(+). Its pathway is one-carbon metabolism; tetrahydrofolate interconversion. Catalyzes the oxidation of 5,10-methylenetetrahydrofolate to 5,10-methenyltetrahydrofolate and then the hydrolysis of 5,10-methenyltetrahydrofolate to 10-formyltetrahydrofolate. This Methanoculleus marisnigri (strain ATCC 35101 / DSM 1498 / JR1) protein is Bifunctional protein FolD.